The following is a 478-amino-acid chain: ATP synthase subunit beta (478 aa).

ATP is bound at residue 151–158 (GGAGVGKT).

It belongs to the ATPase alpha/beta chains family. As to quaternary structure, F-type ATPases have 2 components, CF(1) - the catalytic core - and CF(0) - the membrane proton channel. CF(1) has five subunits: alpha(3), beta(3), gamma(1), delta(1), epsilon(1). CF(0) has three main subunits: a(1), b(2) and c(9-12). The alpha and beta chains form an alternating ring which encloses part of the gamma chain. CF(1) is attached to CF(0) by a central stalk formed by the gamma and epsilon chains, while a peripheral stalk is formed by the delta and b chains.

Its subcellular location is the cell inner membrane. The enzyme catalyses ATP + H2O + 4 H(+)(in) = ADP + phosphate + 5 H(+)(out). Functionally, produces ATP from ADP in the presence of a proton gradient across the membrane. The catalytic sites are hosted primarily by the beta subunits. The sequence is that of ATP synthase subunit beta from Xanthobacter autotrophicus (strain ATCC BAA-1158 / Py2).